The sequence spans 617 residues: Na(+)/H(+) antiporter NhaA 1 (617 aa).

Residues 1–433 are na(+)/H(+) antiporter NhaA; it reads MTVTEQTTAR…GWAIFRITDW (433 aa). The next 11 membrane-spanning stretches (helical) occupy residues 33 to 53, 75 to 95, 113 to 133, 141 to 161, 171 to 191, 194 to 214, 234 to 254, 304 to 324, 340 to 360, 378 to 398, and 411 to 431; these read AAAL…SPWA, MTVK…IVGL, AVPV…FLAF, HAWG…LAII, LFLL…IAVF, DAIQ…LALV, VALY…ALLI, VGPA…AGVL, WGVV…ATWL, IAGG…IVDI, and IGVL…FRIT. A Thioredoxin domain is found at 434–617; sequence LSPPEPVGLK…LIRALEAGRR (184 aa).

It in the N-terminal section; belongs to the NhaA Na(+)/H(+) (TC 2.A.33) antiporter family.

Its subcellular location is the cell membrane. It carries out the reaction Na(+)(in) + 2 H(+)(out) = Na(+)(out) + 2 H(+)(in). Its function is as follows. Na(+)/H(+) antiporter that extrudes sodium in exchange for external protons. The sequence is that of Na(+)/H(+) antiporter NhaA 1 from Mycolicibacterium vanbaalenii (strain DSM 7251 / JCM 13017 / BCRC 16820 / KCTC 9966 / NRRL B-24157 / PYR-1) (Mycobacterium vanbaalenii).